A 541-amino-acid chain; its full sequence is Eukaryotic translation initiation factor 3 subunit L (541 aa).

Residues 308–516 (TFSDILLYIQ…IHIADTKVSH (209 aa)) enclose the PCI domain.

This sequence belongs to the eIF-3 subunit L family. In terms of assembly, component of the eukaryotic translation initiation factor 3 (eIF-3) complex. The eIF-3 complex interacts with pix.

Its subcellular location is the cytoplasm. Functionally, component of the eukaryotic translation initiation factor 3 (eIF-3) complex, which is involved in protein synthesis of a specialized repertoire of mRNAs and, together with other initiation factors, stimulates binding of mRNA and methionyl-tRNAi to the 40S ribosome. The eIF-3 complex specifically targets and initiates translation of a subset of mRNAs involved in cell proliferation. The protein is Eukaryotic translation initiation factor 3 subunit L of Drosophila pseudoobscura pseudoobscura (Fruit fly).